Reading from the N-terminus, the 447-residue chain is Cobyrinate a,c-diamide synthase (447 aa).

Residues 252–439 (KIAVAFDESF…AHQHCIGNPY (188 aa)) enclose the GATase cobBQ-type domain. C331 (nucleophile) is an active-site residue.

The protein belongs to the CobB/CbiA family. The cofactor is Mg(2+).

It carries out the reaction cob(II)yrinate + 2 L-glutamine + 2 ATP + 2 H2O = cob(II)yrinate a,c diamide + 2 L-glutamate + 2 ADP + 2 phosphate + 2 H(+). The enzyme catalyses Ni-sirohydrochlorin + 2 L-glutamine + 2 ATP + 2 H2O = Ni-sirohydrochlorin a,c-diamide + 2 L-glutamate + 2 ADP + 2 phosphate + 2 H(+). It functions in the pathway cofactor biosynthesis; adenosylcobalamin biosynthesis; cob(II)yrinate a,c-diamide from sirohydrochlorin (anaerobic route): step 10/10. In terms of biological role, catalyzes the ATP-dependent amidation of the two carboxylate groups at positions a and c of cobyrinate, using either L-glutamine or ammonia as the nitrogen source. Involved in the biosynthesis of the unique nickel-containing tetrapyrrole coenzyme F430, the prosthetic group of methyl-coenzyme M reductase (MCR), which plays a key role in methanogenesis and anaerobic methane oxidation. Catalyzes the ATP-dependent amidation of the two carboxylate groups at positions a and c of Ni-sirohydrochlorin, using L-glutamine or ammonia as the nitrogen source. This chain is Cobyrinate a,c-diamide synthase, found in Methanococcus maripaludis (strain C5 / ATCC BAA-1333).